A 48-amino-acid chain; its full sequence is ATP synthase protein 8 (48 aa).

Residues 12 to 32 (LLTGGILAISLLLYFVATYLL) traverse the membrane as a helical segment.

The protein belongs to the ATPase protein 8 family. In terms of assembly, F-type ATPases have 2 components, CF(1) - the catalytic core - and CF(0) - the membrane proton channel.

The protein localises to the mitochondrion membrane. Mitochondrial membrane ATP synthase (F(1)F(0) ATP synthase or Complex V) produces ATP from ADP in the presence of a proton gradient across the membrane which is generated by electron transport complexes of the respiratory chain. F-type ATPases consist of two structural domains, F(1) - containing the extramembraneous catalytic core and F(0) - containing the membrane proton channel, linked together by a central stalk and a peripheral stalk. During catalysis, ATP synthesis in the catalytic domain of F(1) is coupled via a rotary mechanism of the central stalk subunits to proton translocation. Part of the complex F(0) domain. Minor subunit located with subunit a in the membrane. The protein is ATP synthase protein 8 (ATP8) of Candida parapsilosis (Yeast).